The sequence spans 1414 residues: MVHATACSEIIRAEVAELLGVRADALHPGANLVGQGLDSIRMMSLVGRWRRKGIAVDFATLAATPTIEAWSQLVSAGTGVAPTAVAAPGDAGLSQEGEPFPVAPMQHAMWVGRHDHQQLGGVAGHLYVEFDGARVDPDRLRAAATRLALRHPMLRVQFLPDGTQRIPPAAGSRDFPISVADLRHVAPDVVDQRLAGIRDAKSHQQLDGAVFELALTLLPGERTRLHVDLDMQAADAMSYRILLADLAALYDGREPPALGYTYREYRQAIEAEETLPQPVRDADRDWWAQRIPQLPDPPALPTRAGGERDRRRSTRRWHWLDPQTRDALFARARARGITPAMTLAAAFANVLARWSASSRFLLNLPLFSRQALHPDVDLLVGDFTSSLLLDVDLTGARTAAARAQAVQEALRTAAGHSAYPGLSVLRDLSRHRGTQVLAPVVFTSALGLGDLFCPDVTEQFGTPGWIISQGPQVLLDAQVTEFDGGVLVNWDVREGVFAPGVIDAMFTHQVDELLRLAAGDDAWDAPSPSALPAAQRAVRAALNGRTAAPSTEALHDGFFRQAQQQPDAPAVFASSGDLSYAQLRDQASAVAAALRAAGLRVGDTVAVLGPKTGEQVAAVLGILAAGGVYLPIGVDQPRDRAERILATGSVNLALVCGPPCQVRVPVPTLLLADVLAAAPAEFVPGPSDPTALAYVLFTSGSTGEPKGVEVAHDAAMNTVETFIRHFELGAADRWLALATLECDMSVLDIFAALRSGGAIVVVDEAQRRDPDAWARLIDTYEVTALNFMPGWLDMLLEVGGGRLSSLRAVAVGGDWVRPDLARRLQVQAPSARFAGLGGATETAVHATIFEVQDAANLPPDWASVPYGVPFPNNACRVVADSGDDCPDWVAGELWVSGRGIARGYRGRPELTAERFVEHDGRTWYRTGDLARYWHDGTLEFVGRADHRVKISGYRVELGEIEAALQRLPGVHAAAATVLPGGSDVLAAAVCVDDAGVTAESIRQQLADLVPAHMIPRHVTLLDRIPFTDSGKIDRAEVGALLAAEVERSGDRSAPYAAPRTVLQRALRRIVADILGRANDAVGVHDDFFALGGDSVLATQVVAGIRRWLDSPSLMVADMFAARTIAALAQLLTGREANADRLELVAEVYLEIANMTSADVMAALDPIEQPAQPAFKPWVKRFTGTDKPGAVLVFPHAGGAAAAYRWLAKSLVANDVDTFVVQYPQRADRRSHPAADSIEALALELFEAGDWHLTAPLTLFGHCMGAIVAFEFARLAERNGVPVRALWASSGQAPSTVAASGPLPTADRDVLADMVDLGGTDPVLLEDEEFVELLVPAVKADYRALSGYSCPPDVRIRANIHAVGGNRDHRISREMLTSWETHTSGRFTLSHFDGGHFYLNDHLDAVARMVSADVR.

One can recognise a Carrier 1 domain in the interval 5 to 78 (TACSEIIRAE…AWSQLVSAGT (74 aa)). At S39 the chain carries O-(pantetheine 4'-phosphoryl)serine. Positions 96-394 (EGEPFPVAPM…SSLLLDVDLT (299 aa)) are condensation/cyclization. Residues 579–975 (SYAQLRDQAS…RLPGVHAAAA (397 aa)) form an adenylation region. Residues 1057–1135 (APRTVLQRAL…ALAQLLTGRE (79 aa)) form the Carrier 2 domain. S1094 bears the O-(pantetheine 4'-phosphoryl)serine mark. The segment at 1188–1413 (GAVLVFPHAG…AVARMVSADV (226 aa)) is thioesterase.

The protein belongs to the ATP-dependent AMP-binding enzyme family. MbtB subfamily. Requires pantetheine 4'-phosphate as cofactor. In terms of processing, 4'-phosphopantetheine is transferred from CoA to a specific serine in each of the two carrier protein domains, leading to their activation from apo to holo forms.

Its pathway is siderophore biosynthesis; mycobactin biosynthesis. Involved in the initial steps of the mycobactin biosynthetic pathway. Putatively couples activated salicylic acid with serine or threonine and cyclizes this precursor to the hydroxyphenyloxazoline ring system present in this class of siderophores. Essential for growth in macrophages. This chain is Phenyloxazoline synthase MbtB (mbtB), found in Mycobacterium tuberculosis (strain CDC 1551 / Oshkosh).